Reading from the N-terminus, the 372-residue chain is DNA replication and repair protein RecF (372 aa).

Residue 30–37 (GENGQGKT) coordinates ATP.

This sequence belongs to the RecF family.

It localises to the cytoplasm. Functionally, the RecF protein is involved in DNA metabolism; it is required for DNA replication and normal SOS inducibility. RecF binds preferentially to single-stranded, linear DNA. It also seems to bind ATP. This chain is DNA replication and repair protein RecF, found in Anaeromyxobacter dehalogenans (strain 2CP-1 / ATCC BAA-258).